The primary structure comprises 326 residues: Malate dehydrogenase (326 aa).

12–18 (GGTGQIA) contacts NAD(+). Substrate is bound by residues arginine 93 and arginine 99. NAD(+)-binding positions include asparagine 106, glutamine 113, and 130 to 132 (VGN). Substrate-binding residues include asparagine 132 and arginine 163. Histidine 188 acts as the Proton acceptor in catalysis.

It belongs to the LDH/MDH superfamily. MDH type 2 family.

The catalysed reaction is (S)-malate + NAD(+) = oxaloacetate + NADH + H(+). Catalyzes the reversible oxidation of malate to oxaloacetate. This is Malate dehydrogenase from Chlamydia trachomatis serovar D (strain ATCC VR-885 / DSM 19411 / UW-3/Cx).